The following is a 124-amino-acid chain: Fluoride-specific ion channel FluC (124 aa).

4 helical membrane passes run 5–25 (ILAV…TGTW), 38–58 (TLAV…LFLL), 69–89 (GLIV…LDTL), and 99–119 (LALG…WAGL). Na(+) contacts are provided by glycine 76 and threonine 79.

Belongs to the fluoride channel Fluc/FEX (TC 1.A.43) family.

The protein localises to the cell inner membrane. It carries out the reaction fluoride(in) = fluoride(out). Its activity is regulated as follows. Na(+) is not transported, but it plays an essential structural role and its presence is essential for fluoride channel function. In terms of biological role, fluoride-specific ion channel. Important for reducing fluoride concentration in the cell, thus reducing its toxicity. This is Fluoride-specific ion channel FluC from Pseudomonas syringae pv. syringae (strain B728a).